The primary structure comprises 215 residues: NADH-quinone oxidoreductase subunit C (215 aa).

This sequence belongs to the complex I 30 kDa subunit family. In terms of assembly, NDH-1 is composed of 14 different subunits. Subunits NuoB, C, D, E, F, and G constitute the peripheral sector of the complex.

The protein localises to the cell inner membrane. It carries out the reaction a quinone + NADH + 5 H(+)(in) = a quinol + NAD(+) + 4 H(+)(out). In terms of biological role, NDH-1 shuttles electrons from NADH, via FMN and iron-sulfur (Fe-S) centers, to quinones in the respiratory chain. The immediate electron acceptor for the enzyme in this species is believed to be ubiquinone. Couples the redox reaction to proton translocation (for every two electrons transferred, four hydrogen ions are translocated across the cytoplasmic membrane), and thus conserves the redox energy in a proton gradient. The sequence is that of NADH-quinone oxidoreductase subunit C from Methylobacterium radiotolerans (strain ATCC 27329 / DSM 1819 / JCM 2831 / NBRC 15690 / NCIMB 10815 / 0-1).